A 616-amino-acid chain; its full sequence is Dihydroxy-acid dehydratase (616 aa).

Mg(2+) is bound at residue aspartate 81. [2Fe-2S] cluster is bound at residue cysteine 122. Mg(2+) is bound by residues aspartate 123 and lysine 124. The residue at position 124 (lysine 124) is an N6-carboxylysine. [2Fe-2S] cluster is bound at residue cysteine 195. Glutamate 491 lines the Mg(2+) pocket. Serine 517 (proton acceptor) is an active-site residue.

Belongs to the IlvD/Edd family. Homodimer. [2Fe-2S] cluster is required as a cofactor. The cofactor is Mg(2+).

It catalyses the reaction (2R)-2,3-dihydroxy-3-methylbutanoate = 3-methyl-2-oxobutanoate + H2O. The enzyme catalyses (2R,3R)-2,3-dihydroxy-3-methylpentanoate = (S)-3-methyl-2-oxopentanoate + H2O. It participates in amino-acid biosynthesis; L-isoleucine biosynthesis; L-isoleucine from 2-oxobutanoate: step 3/4. Its pathway is amino-acid biosynthesis; L-valine biosynthesis; L-valine from pyruvate: step 3/4. Functionally, functions in the biosynthesis of branched-chain amino acids. Catalyzes the dehydration of (2R,3R)-2,3-dihydroxy-3-methylpentanoate (2,3-dihydroxy-3-methylvalerate) into 2-oxo-3-methylpentanoate (2-oxo-3-methylvalerate) and of (2R)-2,3-dihydroxy-3-methylbutanoate (2,3-dihydroxyisovalerate) into 2-oxo-3-methylbutanoate (2-oxoisovalerate), the penultimate precursor to L-isoleucine and L-valine, respectively. This Klebsiella pneumoniae subsp. pneumoniae (strain ATCC 700721 / MGH 78578) protein is Dihydroxy-acid dehydratase.